The following is an 832-amino-acid chain: SID1 transmembrane family member 2 (832 aa).

The first 18 residues, 1 to 18 (MIAWRLPLCVLLVASVES), serve as a signal peptide directing secretion. Topologically, residues 19 to 293 (HLGALGPKNV…VSQAVTSEAY (275 aa)) are extracellular. Residues Asn27, Asn54, Asn60, Asn123, Asn141, and Asn165 are each glycosylated (N-linked (GlcNAc...) asparagine). Residues 294–314 (VGGMLFCLGIFLSFYLLTVLL) form a helical membrane-spanning segment. The Cytoplasmic segment spans residues 315 to 447 (ACWENWRQRK…DKRVLRKKYQ (133 aa)). A phosphoserine mark is found at Ser401, Ser403, and Ser404. Residues 448–468 (IYFWNIATIAVFYALPVVQLV) traverse the membrane as a helical segment. The Extracellular segment spans residues 469–499 (ITYQTVVNVTGNQDICYYNFLCAHPLGNLSA). N-linked (GlcNAc...) asparagine glycosylation is found at Asn476 and Asn496. A helical transmembrane segment spans residues 500 to 520 (FNNILSNLGYILLGLLFLLII). The Cytoplasmic segment spans residues 521-546 (LQREINHNRALLRNDLYALECGIPKH). The helical transmembrane segment at 547 to 567 (FGLFYAMGTALMMEGLLSACY) threads the bilayer. Over 568–605 (HVCPNYTNFQFDTSFMYMIAGLCMLKLYQKRHPDINAS) the chain is Extracellular. N-linked (GlcNAc...) asparagine glycans are attached at residues Asn572 and Asn603. Residues 606 to 626 (AYSAYACLAIVIFFSVLGVVF) form a helical membrane-spanning segment. Residues 627–631 (GKGNT) are Cytoplasmic-facing. A helical membrane pass occupies residues 632–652 (AFWIVFSVIHIISTLLLSTQL). Residues 653-688 (YYMGRWKLDSGIFRRILHVLYTDCIRQCSGPLYTDR) lie on the Extracellular side of the membrane. Residues 689 to 709 (MVLLVMGNIINWSLAAYGLIM) traverse the membrane as a helical segment. Residues 710 to 715 (RPNDFA) lie on the Cytoplasmic side of the membrane. A helical membrane pass occupies residues 716 to 736 (SYLLAIGICNLLLYFAFYIIM). Over 737–746 (KLRSGERIKL) the chain is Extracellular. A helical membrane pass occupies residues 747–767 (IPLLCIVCTSVVWGFALFFFF). At 768–796 (QGLSTWQKTPAESREHNRDCILLDFFDDH) the chain is on the cytoplasmic side. Residues 797 to 817 (DIWHFLSSIAMFGSFLVLLTL) traverse the membrane as a helical segment. Over 818 to 832 (DDDLDTVQRDKIYVF) the chain is Extracellular.

It belongs to the SID1 family. Interacts with adapter protein complex 1 (AP-1) and AP-2, but not AP-3 and AP-4. Interacts with LAMP2. Post-translationally, glycosylated. Widely expressed, including in the liver, brain and kidney (at protein level).

It localises to the lysosome membrane. The protein localises to the cell membrane. Mediates the translocation of RNA and DNA across the lysosomal membrane during RNA and DNA autophagy (RDA), a process in which RNA and DNA is directly imported into lysosomes in an ATP-dependent manner, and degraded. Involved in the uptake of single-stranded oligonucleotides by living cells, a process called gymnosis. In vitro, mediates the uptake of linear DNA more efficiently than that of circular DNA, but exhibits similar uptake efficacy toward RNA and DNA. Binds long double-stranded RNA (dsRNA) (500 - 700 base pairs), but not dsRNA shorter than 100 bp. The sequence is that of SID1 transmembrane family member 2 (Sidt2) from Mus musculus (Mouse).